The following is a 218-amino-acid chain: NAD(P)H-quinone oxidoreductase subunit I (218 aa).

4Fe-4S ferredoxin-type domains lie at 55–84 (GRIHYEFDKCIACEVCVRVCPINLPVVDWV) and 95–124 (RNYSIDFGACIFCGNCVEYCPTNCLSMTEE). Residues Cys64, Cys67, Cys70, Cys74, Cys104, Cys107, Cys110, and Cys114 each coordinate [4Fe-4S] cluster. Positions 179–218 (LRAGKLPSQIIKELQADKSEEEGKNNSSDMVPNKLNSTNK) are disordered. Positions 192–202 (LQADKSEEEGK) are enriched in basic and acidic residues. A compositionally biased stretch (polar residues) spans 203–218 (NNSSDMVPNKLNSTNK).

The protein belongs to the complex I 23 kDa subunit family. NDH-1 is composed of at least 11 different subunits. It depends on [4Fe-4S] cluster as a cofactor.

It is found in the cellular thylakoid membrane. It carries out the reaction a plastoquinone + NADH + (n+1) H(+)(in) = a plastoquinol + NAD(+) + n H(+)(out). The enzyme catalyses a plastoquinone + NADPH + (n+1) H(+)(in) = a plastoquinol + NADP(+) + n H(+)(out). NDH-1 shuttles electrons from an unknown electron donor, via FMN and iron-sulfur (Fe-S) centers, to quinones in the respiratory and/or the photosynthetic chain. The immediate electron acceptor for the enzyme in this species is believed to be plastoquinone. Couples the redox reaction to proton translocation, and thus conserves the redox energy in a proton gradient. The sequence is that of NAD(P)H-quinone oxidoreductase subunit I from Prochlorococcus marinus (strain NATL2A).